Consider the following 34-residue polypeptide: YYICESCWTCESCAGSTESSCVSACNACDLCPNK.

Contains 4 disulfide bonds. Expressed by the venom duct.

It localises to the secreted. Functionally, acts as a neurotoxin by inhibiting an ion channel. This is Turripeptide OL127 from Iotyrris olangoensis (Sea snail).